Reading from the N-terminus, the 251-residue chain is Zinc import ATP-binding protein ZnuC (251 aa).

The ABC transporter domain occupies 5-220 (VSLENVSVSF…PEFISMFGPR (216 aa)). Position 37 to 44 (37 to 44 (GPNGAGKS)) interacts with ATP.

Belongs to the ABC transporter superfamily. Zinc importer (TC 3.A.1.15.5) family. As to quaternary structure, the complex is composed of two ATP-binding proteins (ZnuC), two transmembrane proteins (ZnuB) and a solute-binding protein (ZnuA).

The protein resides in the cell inner membrane. It catalyses the reaction Zn(2+)(out) + ATP(in) + H2O(in) = Zn(2+)(in) + ADP(in) + phosphate(in) + H(+)(in). Functionally, part of the ABC transporter complex ZnuABC involved in zinc import. Responsible for energy coupling to the transport system. The sequence is that of Zinc import ATP-binding protein ZnuC from Salmonella typhi.